A 158-amino-acid polypeptide reads, in one-letter code: Transcription factor BTF3 homolog 4 (158 aa).

The residue at position 5 (lysine 5) is an N6-methyllysine. Residues 33–98 (TADDKKLQSS…AEAKPITEML (66 aa)) form the NAC-A/B domain. Threonine 111 carries the phosphothreonine modification. The disordered stretch occupies residues 122-158 (RQVLDSKAPKPEDIDEEDDDVPDLVENFDEASKNEAN). Positions 134–150 (DIDEEDDDVPDLVENFD) are enriched in acidic residues.

This sequence belongs to the NAC-beta family.

The sequence is that of Transcription factor BTF3 homolog 4 (BTF3L4) from Homo sapiens (Human).